The sequence spans 409 residues: Putative kinase Y4dM (409 aa).

Residue D293 is the Proton acceptor of the active site.

It belongs to the HipA Ser/Thr kinase family.

The sequence is that of Putative kinase Y4dM from Sinorhizobium fredii (strain NBRC 101917 / NGR234).